The sequence spans 249 residues: 1-(5-phosphoribosyl)-5-[(5-phosphoribosylamino)methylideneamino] imidazole-4-carboxamide isomerase (249 aa).

Asp8 acts as the Proton acceptor in catalysis. Asp131 (proton donor) is an active-site residue.

Belongs to the HisA/HisF family.

The protein localises to the cytoplasm. It carries out the reaction 1-(5-phospho-beta-D-ribosyl)-5-[(5-phospho-beta-D-ribosylamino)methylideneamino]imidazole-4-carboxamide = 5-[(5-phospho-1-deoxy-D-ribulos-1-ylimino)methylamino]-1-(5-phospho-beta-D-ribosyl)imidazole-4-carboxamide. Its pathway is amino-acid biosynthesis; L-histidine biosynthesis; L-histidine from 5-phospho-alpha-D-ribose 1-diphosphate: step 4/9. This Nitrosomonas europaea (strain ATCC 19718 / CIP 103999 / KCTC 2705 / NBRC 14298) protein is 1-(5-phosphoribosyl)-5-[(5-phosphoribosylamino)methylideneamino] imidazole-4-carboxamide isomerase.